The following is a 256-amino-acid chain: Thiazole synthase (256 aa).

Lys-95 functions as the Schiff-base intermediate with DXP in the catalytic mechanism. 1-deoxy-D-xylulose 5-phosphate is bound by residues Gly-156, 182–183, and 204–205; these read AG and NT.

Belongs to the ThiG family. Homotetramer. Forms heterodimers with either ThiH or ThiS.

It is found in the cytoplasm. It catalyses the reaction [ThiS sulfur-carrier protein]-C-terminal-Gly-aminoethanethioate + 2-iminoacetate + 1-deoxy-D-xylulose 5-phosphate = [ThiS sulfur-carrier protein]-C-terminal Gly-Gly + 2-[(2R,5Z)-2-carboxy-4-methylthiazol-5(2H)-ylidene]ethyl phosphate + 2 H2O + H(+). Its pathway is cofactor biosynthesis; thiamine diphosphate biosynthesis. In terms of biological role, catalyzes the rearrangement of 1-deoxy-D-xylulose 5-phosphate (DXP) to produce the thiazole phosphate moiety of thiamine. Sulfur is provided by the thiocarboxylate moiety of the carrier protein ThiS. In vitro, sulfur can be provided by H(2)S. In Salmonella typhi, this protein is Thiazole synthase.